The following is a 469-amino-acid chain: uncharacterized protein (469 aa).

Residues 11–65 (LFISVAFSQESVEDLKRLLEEYKKKIQEIERRLEELEKAKKEEEKKKEAVALKPT) adopt a coiled-coil conformation.

This is an uncharacterized protein from Aquifex aeolicus (strain VF5).